Reading from the N-terminus, the 424-residue chain is Calreticulin (424 aa).

A signal peptide spans 1–19 (MRLLLCLIFLVFVFNFALS). A disulfide bond links cysteine 105 and cysteine 137. The an alpha-D-glucoside site is built by tyrosine 109, lysine 111, tyrosine 128, and aspartate 135. Repeat copies occupy residues 191-202 (IQAGNLADDWEL), 210-221 (DPKQSKPVDWVD), 227-238 (DPEDVKPAGHDD), 246-256 (PEAVKPEDWNE), 260-270 (GEWEAPTIANP), 274-284 (GEWKAKKIPNP), and 288-298 (GEWVHPLIDNP). Positions 191-256 (IQAGNLADDW…EAVKPEDWNE (66 aa)) are 4 X 12 AA approximate repeats. Positions 260-298 (GEWEAPTIANPEYKGEWKAKKIPNPEYKGEWVHPLIDNP) are 3 X 11 AA approximate repeats. Glutamate 318 serves as a coordination point for an alpha-D-glucoside. The span at 370 to 385 (RKKADEKLAAEKAAEK) shows a compositional bias: basic and acidic residues. The disordered stretch occupies residues 370-424 (RKKADEKLAAEKAAEKEAEEADEEEEEVAEEDLVKTDDKKEEVKKSTKKVDHDEL). Over residues 386–400 (EAEEADEEEEEVAEE) the composition is skewed to acidic residues. Over residues 401–424 (DLVKTDDKKEEVKKSTKKVDHDEL) the composition is skewed to basic and acidic residues. The Prevents secretion from ER signature appears at 421–424 (HDEL).

This sequence belongs to the calreticulin family.

It is found in the endoplasmic reticulum lumen. Molecular calcium-binding chaperone promoting folding, oligomeric assembly and quality control in the ER via the calreticulin/calnexin cycle. This lectin may interact transiently with almost all of the monoglucosylated glycoproteins that are synthesized in the ER. This chain is Calreticulin (crtA), found in Dictyostelium discoideum (Social amoeba).